Reading from the N-terminus, the 636-residue chain is Probable potassium transport system protein Kup (636 aa).

Transmembrane regions (helical) follow at residues 22-42, 64-84, 114-134, 150-170, 182-202, 220-240, 261-281, 293-313, 351-371, 383-403, 408-428, and 433-453; these read MGLL…SPLY, ILSL…VMFI, ALMV…SMIT, FEGI…ALFL, LFGP…VHGI, FFIV…LALT, WFAL…AILL, LLAP…ATVI, IYIG…VIGF, VAVT…MLLL, PVLA…FFAA, and IVQG…LMST.

It belongs to the HAK/KUP transporter (TC 2.A.72) family.

It localises to the cell inner membrane. The enzyme catalyses K(+)(in) + H(+)(in) = K(+)(out) + H(+)(out). Transport of potassium into the cell. Likely operates as a K(+):H(+) symporter. This Pseudomonas entomophila (strain L48) protein is Probable potassium transport system protein Kup.